An 86-amino-acid chain; its full sequence is MKPGIHPDYREVVFQDMSNGFKFITRSTIQTRENIELDGKTYPLAKIEVSSESHSFYTGQQKIMDTAGRVEKFKNKFGVRANGKAK.

This sequence belongs to the bacterial ribosomal protein bL31 family. Type B subfamily. In terms of assembly, part of the 50S ribosomal subunit.

The chain is Large ribosomal subunit protein bL31B from Burkholderia cenocepacia (strain ATCC BAA-245 / DSM 16553 / LMG 16656 / NCTC 13227 / J2315 / CF5610) (Burkholderia cepacia (strain J2315)).